The primary structure comprises 838 residues: DNA gyrase subunit A (838 aa).

One can recognise a Topo IIA-type catalytic domain in the interval 41–510 (LPEVRDGLKP…ADGDVSDEDL (470 aa)). The active-site O-(5'-phospho-DNA)-tyrosine intermediate is the Tyr-129. The short motif at 537–543 (QKRGGKG) is the GyrA-box element.

Belongs to the type II topoisomerase GyrA/ParC subunit family. Heterotetramer, composed of two GyrA and two GyrB chains. In the heterotetramer, GyrA contains the active site tyrosine that forms a transient covalent intermediate with DNA, while GyrB binds cofactors and catalyzes ATP hydrolysis.

The protein localises to the cytoplasm. It carries out the reaction ATP-dependent breakage, passage and rejoining of double-stranded DNA.. A type II topoisomerase that negatively supercoils closed circular double-stranded (ds) DNA in an ATP-dependent manner to modulate DNA topology and maintain chromosomes in an underwound state. Negative supercoiling favors strand separation, and DNA replication, transcription, recombination and repair, all of which involve strand separation. Also able to catalyze the interconversion of other topological isomers of dsDNA rings, including catenanes and knotted rings. Type II topoisomerases break and join 2 DNA strands simultaneously in an ATP-dependent manner. The chain is DNA gyrase subunit A from Mycobacterium tuberculosis (strain CDC 1551 / Oshkosh).